Here is a 268-residue protein sequence, read N- to C-terminus: Octanoyltransferase (268 aa).

A BPL/LPL catalytic domain is found at 73-261 (GEADELVWLL…AFEEVFGPAV (189 aa)). Substrate-binding positions include 112 to 119 (RGGEYTYH), 192 to 194 (ALG), and 205 to 207 (GLS). Catalysis depends on Cys-223, which acts as the Acyl-thioester intermediate.

Belongs to the LipB family.

It is found in the cytoplasm. It catalyses the reaction octanoyl-[ACP] + L-lysyl-[protein] = N(6)-octanoyl-L-lysyl-[protein] + holo-[ACP] + H(+). It participates in protein modification; protein lipoylation via endogenous pathway; protein N(6)-(lipoyl)lysine from octanoyl-[acyl-carrier-protein]: step 1/2. In terms of biological role, catalyzes the transfer of endogenously produced octanoic acid from octanoyl-acyl-carrier-protein onto the lipoyl domains of lipoate-dependent enzymes. Lipoyl-ACP can also act as a substrate although octanoyl-ACP is likely to be the physiological substrate. The protein is Octanoyltransferase of Agrobacterium fabrum (strain C58 / ATCC 33970) (Agrobacterium tumefaciens (strain C58)).